An 81-amino-acid polypeptide reads, in one-letter code: ATP synthase subunit c, chloroplastic (81 aa).

Transmembrane regions (helical) follow at residues 3 to 23 and 57 to 77; these read PLIPAASVIAAGLAVGLASIG and LAFMEALTIYGLVVALALLFA.

Belongs to the ATPase C chain family. As to quaternary structure, F-type ATPases have 2 components, F(1) - the catalytic core - and F(0) - the membrane proton channel. F(1) has five subunits: alpha(3), beta(3), gamma(1), delta(1), epsilon(1). F(0) has four main subunits: a(1), b(1), b'(1) and c(10-14). The alpha and beta chains form an alternating ring which encloses part of the gamma chain. F(1) is attached to F(0) by a central stalk formed by the gamma and epsilon chains, while a peripheral stalk is formed by the delta, b and b' chains.

The protein resides in the plastid. It is found in the chloroplast thylakoid membrane. Its function is as follows. F(1)F(0) ATP synthase produces ATP from ADP in the presence of a proton or sodium gradient. F-type ATPases consist of two structural domains, F(1) containing the extramembraneous catalytic core and F(0) containing the membrane proton channel, linked together by a central stalk and a peripheral stalk. During catalysis, ATP synthesis in the catalytic domain of F(1) is coupled via a rotary mechanism of the central stalk subunits to proton translocation. In terms of biological role, key component of the F(0) channel; it plays a direct role in translocation across the membrane. A homomeric c-ring of between 10-14 subunits forms the central stalk rotor element with the F(1) delta and epsilon subunits. This is ATP synthase subunit c, chloroplastic from Cycas taitungensis (Prince sago).